A 96-amino-acid chain; its full sequence is Small ribosomal subunit protein bS18 (96 aa).

Residues 1 to 22 (MYKDVDSHQRDSRSDGHQDGFK) are compositionally biased toward basic and acidic residues. Residues 1–25 (MYKDVDSHQRDSRSDGHQDGFKKNP) form a disordered region.

Belongs to the bacterial ribosomal protein bS18 family. Part of the 30S ribosomal subunit. Forms a tight heterodimer with protein bS6.

Binds as a heterodimer with protein bS6 to the central domain of the 16S rRNA, where it helps stabilize the platform of the 30S subunit. This Borrelia hermsii (strain HS1 / DAH) protein is Small ribosomal subunit protein bS18.